The chain runs to 127 residues: Large ribosomal subunit protein bL20 (127 aa).

The protein belongs to the bacterial ribosomal protein bL20 family.

Binds directly to 23S ribosomal RNA and is necessary for the in vitro assembly process of the 50S ribosomal subunit. It is not involved in the protein synthesizing functions of that subunit. This Mycoplasma pneumoniae (strain ATCC 29342 / M129 / Subtype 1) (Mycoplasmoides pneumoniae) protein is Large ribosomal subunit protein bL20 (rplT).